A 582-amino-acid polypeptide reads, in one-letter code: Protein NARROW LEAF 1 (582 aa).

Disordered regions lie at residues 1–26 (MKPSDDKAQLSGLAQSEESSLDVDHQ) and 531–582 (GMSP…DLEK). Basic and acidic residues predominate over residues 562–572 (LGDREPKRLRS). Residues 567–573 (PKRLRSD) carry the Nuclear localization signal motif. Low complexity predominate over residues 573–582 (DSGSSLDLEK).

Expressed in leaf sheaths, leaf blades, culms and panicles. Preferentially expressed in vascular tissues in leaves and culms.

Its subcellular location is the nucleus. The protein localises to the nucleoplasm. It localises to the cytoplasm. In terms of biological role, involved in the regulation of lateral leaf growth. May be involved in the regulation of basipetal polar auxin transport (PAT) and vascular patterning in leaves. Controls photosynthesis rate by regulating carboxylation efficiency and consequently photosynthesis rate. Controls panicle and spikelet numbers, and grain yield. This chain is Protein NARROW LEAF 1, found in Oryza sativa subsp. japonica (Rice).